Consider the following 67-residue polypeptide: Large ribosomal subunit protein uL30 (67 aa).

It belongs to the universal ribosomal protein uL30 family. Part of the 50S ribosomal subunit.

This is Large ribosomal subunit protein uL30 from Thermotoga petrophila (strain ATCC BAA-488 / DSM 13995 / JCM 10881 / RKU-1).